Reading from the N-terminus, the 210-residue chain is Large ribosomal subunit protein uL4 (210 aa).

Residues 44–54 (QRQGTASTLTR) show a composition bias toward polar residues. A disordered region spans residues 44 to 96 (QRQGTASTLTRSEVRGGGRKPYKQKGTGRARQGSIRTPLRPGGGVIFGPKPRS). Residues 60 to 71 (GGRKPYKQKGTG) show a composition bias toward basic residues.

It belongs to the universal ribosomal protein uL4 family. Part of the 50S ribosomal subunit.

One of the primary rRNA binding proteins, this protein initially binds near the 5'-end of the 23S rRNA. It is important during the early stages of 50S assembly. It makes multiple contacts with different domains of the 23S rRNA in the assembled 50S subunit and ribosome. Its function is as follows. Forms part of the polypeptide exit tunnel. In Prochlorococcus marinus (strain MIT 9515), this protein is Large ribosomal subunit protein uL4.